We begin with the raw amino-acid sequence, 182 residues long: Plasmolipin (182 aa).

Residues 1-20 (MAEFPSKVSTRTSSPAQGVG) are disordered. Residues 1–35 (MAEFPSKVSTRTSSPAQGVGASVSAMRPDLGFVRS) are Cytoplasmic-facing. The span at 7–16 (KVSTRTSSPA) shows a compositional bias: polar residues. Ser-9 bears the Phosphoserine mark. Positions 32–166 (FVRSALGVLA…SAFFSFQAWR (135 aa)) constitute an MARVEL domain. The helical transmembrane segment at 36–56 (ALGVLALLQLVLGLLVWALIA) threads the bilayer. Topologically, residues 57–68 (DTPYHLYPAYGW) are extracellular. The chain crosses the membrane as a helical span at residues 69–89 (VMFVAVFLWLVTIVFFIIYLF). Residues 90-99 (QLHMKLYMVP) are Cytoplasmic-facing. A helical membrane pass occupies residues 100-120 (WPLVLLVFFVAATVLYITAFV). Residues 121-141 (ACAAAVDLTSLRGSRPYNQRS) lie on the Extracellular side of the membrane. Residues 142–162 (AASFFACLVMIAYGLSAFFSF) traverse the membrane as a helical segment. Over 163–182 (QAWRGVGSNAATSQMAGGYS) the chain is Cytoplasmic.

Belongs to the MAL family. Forms oligomers. In terms of processing, phosphorylated. In terms of tissue distribution, detected to the sciatic nerve, brain and kidney. In the sciatic nerve, found in Schwann cells; in the brain, in developing oligodendrocytes, especially of the corpus callosum, of cortical white matter, in the optic nerve and in the stratum radiatum and stratum oriens of the hippocampus. In kidney, segregated to the apical surface of renal tubular epithelia.

It is found in the cell membrane. It localises to the myelin membrane. Its subcellular location is the apical cell membrane. In terms of biological role, main component of the myelin sheath that plays an important role in myelin membrane biogenesis and myelination. Plays an essential function in apical endocytosis. Regulates epithelial development through the regulation of apical endocytosis. Part of the intracellular machinery that mediates basolateral-to-apical transport of ICAM-1, an essential adhesion receptor in epithelial cells, from the subapical compartment in hepatic epithelial cells. The protein is Plasmolipin (Pllp) of Rattus norvegicus (Rat).